Consider the following 359-residue polypeptide: Peptide chain release factor 1 (359 aa).

An N5-methylglutamine modification is found at Gln-238.

Belongs to the prokaryotic/mitochondrial release factor family. Post-translationally, methylated by PrmC. Methylation increases the termination efficiency of RF1.

It localises to the cytoplasm. Peptide chain release factor 1 directs the termination of translation in response to the peptide chain termination codons UAG and UAA. The chain is Peptide chain release factor 1 from Mycoplasmopsis pulmonis (strain UAB CTIP) (Mycoplasma pulmonis).